The chain runs to 268 residues: MPIKKLISKIVKKKDSDTEKNNYINLSALTEAEREIITNTIELKSKSVREIMVPRVDVVMIPMESSYDKVIKAFNRDRNSRIPVYKDGIDDIVGVLYVKDLIDAEEKNFSLKKILHKPLFVPISISLMELLKNFREKQIHIAMVVDEYGGFSGIVSMEDVLEQIIGDIRDEYDEEDEEIKSNDDGTYLVDARTRIDDFNKYEILPPIPDDEADTVGGFLFSYLGRLPKRNEDIEYNGYSFTVVGKSGNIVTKIRIEKLKKDNTAKNKD.

CBS domains lie at 52-111 (MVPR…NFSL) and 114-171 (ILHK…IRDE).

Belongs to the UPF0053 family.

Bacterial hemolysins are exotoxins that attack blood cell membranes and cause cell rupture by mechanisms not clearly defined. The polypeptide is Hemolysin C (tlyC) (Brachyspira hyodysenteriae (Treponema hyodysenteriae)).